We begin with the raw amino-acid sequence, 745 residues long: Meiotic driver SPOK3 (745 aa).

Positions lysine 4–glutamate 34 form a coiled coil. 2 disordered regions span residues glutamate 173 to glycine 222 and leucine 407 to glutamine 487. Positions threonine 188–glutamine 197 are enriched in basic and acidic residues. Polar residues-rich tracts occupy residues lysine 208–glutamine 217 and serine 409–threonine 422. The tract at residues serine 214 to tryptophan 325 is required for antidote activity. A compositionally biased stretch (basic and acidic residues) spans alanine 466–serine 482. The required for poison activity stretch occupies residues glutamine 491–glycine 745.

It localises to the cytoplasm. The protein resides in the nucleus. Functionally, promotes unequal transmission of alleles from the parental zygote to progeny spores by acting as poison/antidote system, leading to poisoning of progeny that do not inherit the allele. May possess DNA nuclease activity that leads to spore killing, and a kinase activity that confers resistance to the nuclease activity. This chain is Meiotic driver SPOK3, found in Podospora anserina (Pleurage anserina).